Consider the following 474-residue polypeptide: Ribulose bisphosphate carboxylase large chain (474 aa).

Residues asparagine 122 and threonine 172 each contribute to the substrate site. The active-site Proton acceptor is lysine 174. Lysine 176 contributes to the substrate binding site. 3 residues coordinate Mg(2+): lysine 200, aspartate 202, and glutamate 203. Lysine 200 carries the post-translational modification N6-carboxylysine. Residue histidine 293 is the Proton acceptor of the active site. Residues arginine 294, histidine 326, and serine 378 each coordinate substrate.

Belongs to the RuBisCO large chain family. Type I subfamily. Heterohexadecamer of 8 large chains and 8 small chains; disulfide-linked. The disulfide link is formed within the large subunit homodimers. Requires Mg(2+) as cofactor. In terms of processing, the disulfide bond which can form in the large chain dimeric partners within the hexadecamer appears to be associated with oxidative stress and protein turnover.

The protein resides in the carboxysome. It catalyses the reaction 2 (2R)-3-phosphoglycerate + 2 H(+) = D-ribulose 1,5-bisphosphate + CO2 + H2O. The catalysed reaction is D-ribulose 1,5-bisphosphate + O2 = 2-phosphoglycolate + (2R)-3-phosphoglycerate + 2 H(+). In terms of biological role, ruBisCO catalyzes two reactions: the carboxylation of D-ribulose 1,5-bisphosphate, the primary event in carbon dioxide fixation, as well as the oxidative fragmentation of the pentose substrate in the photorespiration process. Both reactions occur simultaneously and in competition at the same active site. The polypeptide is Ribulose bisphosphate carboxylase large chain (Synechococcus sp. (strain JA-3-3Ab) (Cyanobacteria bacterium Yellowstone A-Prime)).